Reading from the N-terminus, the 400-residue chain is NADH-quinone oxidoreductase subunit D (400 aa).

This sequence belongs to the complex I 49 kDa subunit family. As to quaternary structure, NDH-1 is composed of 14 different subunits. Subunits NuoB, C, D, E, F, and G constitute the peripheral sector of the complex.

The protein localises to the cell inner membrane. It catalyses the reaction a quinone + NADH + 5 H(+)(in) = a quinol + NAD(+) + 4 H(+)(out). In terms of biological role, NDH-1 shuttles electrons from NADH, via FMN and iron-sulfur (Fe-S) centers, to quinones in the respiratory chain. The immediate electron acceptor for the enzyme in this species is believed to be menaquinone. Couples the redox reaction to proton translocation (for every two electrons transferred, four hydrogen ions are translocated across the cytoplasmic membrane), and thus conserves the redox energy in a proton gradient. The polypeptide is NADH-quinone oxidoreductase subunit D (Prosthecochloris aestuarii (strain DSM 271 / SK 413)).